A 318-amino-acid polypeptide reads, in one-letter code: NADH-ubiquinone oxidoreductase chain 1 (318 aa).

Helical transmembrane passes span 3 to 23 (TMNLLLLIMSTLAAMAFLTLV), 69 to 89 (ILYITAPALAFSIALLLWTPL), 98 to 118 (FNLGLLFILATSSLTVYSILW), 135 to 155 (AVAQMISYEVTLSIILLSILL), 171 to 191 (HLWLILPSWPLAMMWFTSTLA), 217 to 237 (AGPFALFFMAEYMNIIMMNAL), 253 to 273 (ELFTTSFTIKTLLLTSLFLWI), and 294 to 314 (LPLTLALLMWSTSMPIAISSI).

The protein belongs to the complex I subunit 1 family. Core subunit of respiratory chain NADH dehydrogenase (Complex I) which is composed of 45 different subunits.

It is found in the mitochondrion inner membrane. The enzyme catalyses a ubiquinone + NADH + 5 H(+)(in) = a ubiquinol + NAD(+) + 4 H(+)(out). Functionally, core subunit of the mitochondrial membrane respiratory chain NADH dehydrogenase (Complex I) which catalyzes electron transfer from NADH through the respiratory chain, using ubiquinone as an electron acceptor. Essential for the catalytic activity and assembly of complex I. This is NADH-ubiquinone oxidoreductase chain 1 (MT-ND1) from Papio hamadryas (Hamadryas baboon).